Here is a 289-residue protein sequence, read N- to C-terminus: Phenylalanine-4-hydroxylase (289 aa).

Fe cation is bound by residues histidine 144, histidine 149, and glutamate 189.

It belongs to the biopterin-dependent aromatic amino acid hydroxylase family. Requires Fe(2+) as cofactor.

The catalysed reaction is (6R)-L-erythro-5,6,7,8-tetrahydrobiopterin + L-phenylalanine + O2 = (4aS,6R)-4a-hydroxy-L-erythro-5,6,7,8-tetrahydrobiopterin + L-tyrosine. It functions in the pathway amino-acid degradation; L-phenylalanine degradation; acetoacetate and fumarate from L-phenylalanine: step 1/6. The sequence is that of Phenylalanine-4-hydroxylase (phhA) from Vibrio cholerae serotype O1 (strain ATCC 39315 / El Tor Inaba N16961).